A 420-amino-acid polypeptide reads, in one-letter code: COP9 signalosome complex subunit 5 (420 aa).

The MPN domain occupies 73-208 (AALSALACMK…IGAFRTMPET (136 aa)). Zn(2+) contacts are provided by His-154, His-156, and Asp-167. A JAMM motif motif is present at residues 154–167 (HSHPGYGCWLSGID).

It belongs to the peptidase M67A family. CSN5 subfamily. As to quaternary structure, component of the COP9 signalosome (CSN) complex.

The protein localises to the cytoplasm. It is found in the nucleus. In terms of biological role, catalytic component of the COP9 signalosome (CSN) complex that acts as an regulator of the ubiquitin (Ubl) conjugation pathway by mediating the deneddylation of the cullin subunit of SCF-type E3 ubiquitin-protein ligase complexes. The CSN complex is involved in the regulation of the mating pheromone response. The protein is COP9 signalosome complex subunit 5 (RRI1) of Eremothecium gossypii (strain ATCC 10895 / CBS 109.51 / FGSC 9923 / NRRL Y-1056) (Yeast).